Reading from the N-terminus, the 89-residue chain is Small ribosomal subunit protein bS16c (89 aa).

Belongs to the bacterial ribosomal protein bS16 family.

The protein localises to the plastid. Its subcellular location is the chloroplast. This chain is Small ribosomal subunit protein bS16c, found in Glycine max (Soybean).